The sequence spans 208 residues: Holliday junction branch migration complex subunit RuvA (208 aa).

Residues 1–63 (MIAFVSGPVA…EDSLTLYGFA (63 aa)) are domain I. The interval 64 to 142 (NDDERQVFEL…EPVGAHIGQQ (79 aa)) is domain II. Residues 143–147 (GIGTP) form a flexible linker region. The tract at residues 148-208 (VTSGWRDQLQ…AALQTLNRAR (61 aa)) is domain III.

The protein belongs to the RuvA family. Homotetramer. Forms an RuvA(8)-RuvB(12)-Holliday junction (HJ) complex. HJ DNA is sandwiched between 2 RuvA tetramers; dsDNA enters through RuvA and exits via RuvB. An RuvB hexamer assembles on each DNA strand where it exits the tetramer. Each RuvB hexamer is contacted by two RuvA subunits (via domain III) on 2 adjacent RuvB subunits; this complex drives branch migration. In the full resolvosome a probable DNA-RuvA(4)-RuvB(12)-RuvC(2) complex forms which resolves the HJ.

It is found in the cytoplasm. Functionally, the RuvA-RuvB-RuvC complex processes Holliday junction (HJ) DNA during genetic recombination and DNA repair, while the RuvA-RuvB complex plays an important role in the rescue of blocked DNA replication forks via replication fork reversal (RFR). RuvA specifically binds to HJ cruciform DNA, conferring on it an open structure. The RuvB hexamer acts as an ATP-dependent pump, pulling dsDNA into and through the RuvAB complex. HJ branch migration allows RuvC to scan DNA until it finds its consensus sequence, where it cleaves and resolves the cruciform DNA. This is Holliday junction branch migration complex subunit RuvA from Streptomyces griseus subsp. griseus (strain JCM 4626 / CBS 651.72 / NBRC 13350 / KCC S-0626 / ISP 5235).